A 361-amino-acid polypeptide reads, in one-letter code: MDYHLRVLFSVSLIFVFVSVSVCGDEDVLIRQVVDETEPKVLSSEDHFTLFKKKFGKVYGSIEEHYYRFSVFKANLLRAMRHQKMDPSARHGVTQFSDLTRSEFRRKHLGVKGGFKLPKDANQAPILPTQNLPEEFDWRDRGAVTPVKNQGSCGSCWSFSTTGALEGAHFLATGKLVSLSEQQLVDCDHECDPEEEGSCDSGCNGGLMNSAFEYTLKTGGLMREKDYPYTGTDGGSCKLDRSKIVASVSNFSVVSINEDQIAANLIKNGPLAVAINAAYMQTYIGGVSCPYICSRRLNHGVLLVGYGSAGFSQARLKEKPYWIIKNSWGESWGENGFYKICKGRNICGVDSLVSTVAATTS.

The N-terminal stretch at 1 to 24 is a signal peptide; that stretch reads MDYHLRVLFSVSLIFVFVSVSVCG. Residues 25 to 131 constitute a propeptide, activation peptide; the sequence is DEDVLIRQVV…NQAPILPTQN (107 aa). Intrachain disulfides connect cysteine 153–cysteine 203 and cysteine 187–cysteine 237. The active site involves cysteine 156. Asparagine 250 carries an N-linked (GlcNAc...) asparagine glycan. A disulfide bond links cysteine 293 and cysteine 347. Active-site residues include histidine 299 and asparagine 326.

This sequence belongs to the peptidase C1 family.

The protein localises to the lytic vacuole. Probable thiol protease. The polypeptide is Probable cysteine protease RD19B (Arabidopsis thaliana (Mouse-ear cress)).